The primary structure comprises 408 residues: Dual-specificity RNA methyltransferase RlmN (408 aa).

Glutamate 120 functions as the Proton acceptor in the catalytic mechanism. The 250-residue stretch at 126–375 (EEGRGTLCIS…IRTPRGRDIL (250 aa)) folds into the Radical SAM core domain. Cysteine 133 and cysteine 378 are joined by a disulfide. Residues cysteine 140, cysteine 144, and cysteine 147 each coordinate [4Fe-4S] cluster. Residues 204–205 (GE), serine 236, 258–260 (SLH), and asparagine 335 contribute to the S-adenosyl-L-methionine site. The active-site S-methylcysteine intermediate is the cysteine 378.

It belongs to the radical SAM superfamily. RlmN family. The cofactor is [4Fe-4S] cluster.

It localises to the cytoplasm. It carries out the reaction adenosine(2503) in 23S rRNA + 2 reduced [2Fe-2S]-[ferredoxin] + 2 S-adenosyl-L-methionine = 2-methyladenosine(2503) in 23S rRNA + 5'-deoxyadenosine + L-methionine + 2 oxidized [2Fe-2S]-[ferredoxin] + S-adenosyl-L-homocysteine. The enzyme catalyses adenosine(37) in tRNA + 2 reduced [2Fe-2S]-[ferredoxin] + 2 S-adenosyl-L-methionine = 2-methyladenosine(37) in tRNA + 5'-deoxyadenosine + L-methionine + 2 oxidized [2Fe-2S]-[ferredoxin] + S-adenosyl-L-homocysteine. Functionally, specifically methylates position 2 of adenine 2503 in 23S rRNA and position 2 of adenine 37 in tRNAs. m2A2503 modification seems to play a crucial role in the proofreading step occurring at the peptidyl transferase center and thus would serve to optimize ribosomal fidelity. The chain is Dual-specificity RNA methyltransferase RlmN from Rhizobium leguminosarum bv. trifolii (strain WSM2304).